The primary structure comprises 592 residues: Aspartate--tRNA(Asp/Asn) ligase (592 aa).

Glutamate 175 contributes to the L-aspartate binding site. The aspartate stretch occupies residues 199 to 202; that stretch reads QLFK. Arginine 221 contributes to the L-aspartate binding site. ATP contacts are provided by residues 221-223 and glutamine 230; that span reads RDE. Histidine 447 serves as a coordination point for L-aspartate. Glutamate 481 serves as a coordination point for ATP. Position 488 (arginine 488) interacts with L-aspartate. ATP is bound at residue 533-536; it reads GIDR.

This sequence belongs to the class-II aminoacyl-tRNA synthetase family. Type 1 subfamily. In terms of assembly, homodimer.

The protein resides in the cytoplasm. The enzyme catalyses tRNA(Asx) + L-aspartate + ATP = L-aspartyl-tRNA(Asx) + AMP + diphosphate. Functionally, aspartyl-tRNA synthetase with relaxed tRNA specificity since it is able to aspartylate not only its cognate tRNA(Asp) but also tRNA(Asn). Reaction proceeds in two steps: L-aspartate is first activated by ATP to form Asp-AMP and then transferred to the acceptor end of tRNA(Asp/Asn). In Dictyoglomus turgidum (strain DSM 6724 / Z-1310), this protein is Aspartate--tRNA(Asp/Asn) ligase.